Reading from the N-terminus, the 92-residue chain is Long neurotoxin 1 (92 aa).

Residues 1–21 (MKTLLLTLVVVTIVCLDLGYT) form the signal peptide. Cystine bridges form between Cys-24–Cys-42, Cys-35–Cys-63, Cys-48–Cys-52, Cys-67–Cys-79, and Cys-80–Cys-85.

It belongs to the three-finger toxin family. Long-chain subfamily. Type II alpha-neurotoxin sub-subfamily. In terms of tissue distribution, expressed by the venom gland.

It is found in the secreted. Binds with high affinity to muscular (alpha-1/CHRNA1) and neuronal (alpha-7/CHRNA7) nicotinic acetylcholine receptor (nAChR) and inhibits acetylcholine from binding to the receptor, thereby impairing neuromuscular and neuronal transmission. This is Long neurotoxin 1 from Oxyuranus microlepidotus (Inland taipan).